We begin with the raw amino-acid sequence, 177 residues long: tRNA (cytidine(56)-2'-O)-methyltransferase (177 aa).

Residues L84 and 109–113 contribute to the S-adenosyl-L-methionine site; that span reads GAEKV.

Belongs to the aTrm56 family. In terms of assembly, homodimer.

It is found in the cytoplasm. The enzyme catalyses cytidine(56) in tRNA + S-adenosyl-L-methionine = 2'-O-methylcytidine(56) in tRNA + S-adenosyl-L-homocysteine + H(+). Its function is as follows. Specifically catalyzes the AdoMet-dependent 2'-O-ribose methylation of cytidine at position 56 in tRNAs. This chain is tRNA (cytidine(56)-2'-O)-methyltransferase, found in Methanosarcina acetivorans (strain ATCC 35395 / DSM 2834 / JCM 12185 / C2A).